The sequence spans 180 residues: Large ribosomal subunit protein uL5 (180 aa).

It belongs to the universal ribosomal protein uL5 family. Part of the 50S ribosomal subunit; part of the 5S rRNA/L5/L18/L25 subcomplex. Contacts the 5S rRNA and the P site tRNA. Forms a bridge to the 30S subunit in the 70S ribosome.

This is one of the proteins that bind and probably mediate the attachment of the 5S RNA into the large ribosomal subunit, where it forms part of the central protuberance. In the 70S ribosome it contacts protein S13 of the 30S subunit (bridge B1b), connecting the 2 subunits; this bridge is implicated in subunit movement. Contacts the P site tRNA; the 5S rRNA and some of its associated proteins might help stabilize positioning of ribosome-bound tRNAs. The protein is Large ribosomal subunit protein uL5 of Clostridium acetobutylicum (strain ATCC 824 / DSM 792 / JCM 1419 / IAM 19013 / LMG 5710 / NBRC 13948 / NRRL B-527 / VKM B-1787 / 2291 / W).